We begin with the raw amino-acid sequence, 259 residues long: Small ribosomal subunit protein eS4 (259 aa).

Residues 41–100 (LPLSLFLRNRLKYALNYTEAKKILTQRVVRVDGKVRTCHKFPTGFMDVVAIERTNEYFRM) enclose the S4 RNA-binding domain.

The protein belongs to the eukaryotic ribosomal protein eS4 family.

The polypeptide is Small ribosomal subunit protein eS4 (rps-4) (Caenorhabditis elegans).